A 178-amino-acid chain; its full sequence is Glucagon-1 (178 aa).

The signal sequence occupies residues 1-21 (MFGIHSLAGVLLLVIVQRQLA). 3 propeptides span residues 83–87 (SGAPS), 123–134 (ESAEESRNGPMS), and 171–178 (SNKRQEDH).

Belongs to the glucagon family.

It localises to the secreted. Promotes hydrolysis of glycogen and lipids, and raises the blood sugar level. In Oncorhynchus mykiss (Rainbow trout), this protein is Glucagon-1 (gcg1).